The primary structure comprises 64 residues: DNA-binding protein 7a (64 aa).

It belongs to the 7 kDa DNA-binding/endoribonuclease P2 family. As to quaternary structure, monomer.

The protein localises to the cytoplasm. Functionally, can constrain negative DNA supercoils. May be involved in maintaining the integrity of the genome at high temperature. This is DNA-binding protein 7a from Saccharolobus islandicus (strain L.D.8.5 / Lassen #2) (Sulfolobus islandicus).